The primary structure comprises 535 residues: UDP-glycosyltransferase stmC (535 aa).

N-linked (GlcNAc...) asparagine glycans are attached at residues Asn70 and Asn422. The helical transmembrane segment at 506–526 (ASNLDLYIVCIAFVAVPVGVA) threads the bilayer.

Belongs to the glycosyltransferase 28 family.

It localises to the membrane. It catalyses the reaction stromemycin aglycone + UDP-alpha-D-glucose = stromemycin + UDP + H(+). The enzyme catalyses exophillate aglycone + UDP-alpha-D-glucose = exophillate + UDP + H(+). The protein operates within mycotoxin biosynthesis. In terms of biological role, UDP-glycosyltransferase; part of the gene cluster that mediates the biosynthesis of stromemycin, a depside C-glucoside with two unsaturated C9 side chains belonging to aromatic polyketide glycosides. Acts as the tailoring enzyme responsible for 3-C-glucosylation of bininalkenylresorcylic acid produced by the combined action of the HR-PKS stmA and the NR-PKS stmB to yield stromemycin. Possesses a relatively strict acceptor specificity towards bininalkenylresorcylic acid for C-glycosylation, but is able to use several donors including UDP-alpha-D-galactose, UDP-alpha-D-xylose, UDP-alpha-D-4-keto-6-deoxyglucose, UDP-alpha-D-quinovose, and UDP-beta-L-rhamnose. In Aspergillus ustus, this protein is UDP-glycosyltransferase stmC.